Consider the following 338-residue polypeptide: Taste receptor type 2 member 39 (338 aa).

Residues 1-30 (MLGRCFPPDTKEKQQLRMTKLCDPAESELS) lie on the Extracellular side of the membrane. Residues 31-51 (PFLITLILAVLLAEYLIGIIA) traverse the membrane as a helical segment. Residues 52 to 74 (NGFIMAIHAAEWVQNKAVSTSGR) are Cytoplasmic-facing. A helical membrane pass occupies residues 75–95 (ILVFLSVSRIALQSLMMLEIT). The Extracellular segment spans residues 96–116 (ISSTSLSFYSEDAVYYAFKIS). A helical transmembrane segment spans residues 117 to 137 (FIFLNFCSLWFAAWLSFFYFV). Residues 138–156 (KIANFSYPLFLKLRWRITG) are Cytoplasmic-facing. Residues 157-177 (LIPWLLWLSVFISFSHSMFCI) traverse the membrane as a helical segment. Topologically, residues 178 to 205 (NICTVYCNNSFPIHSSNSTKKTYLSEIN) are extracellular. Residues N185 and N194 are each glycosylated (N-linked (GlcNAc...) asparagine). Residues 206–226 (VVGLAFFFNLGIVTPLIMFIL) traverse the membrane as a helical segment. Topologically, residues 227–262 (TATLLILSLKRHTLHMGSNATGSNDPSMEAHMGAIK) are cytoplasmic. The chain crosses the membrane as a helical span at residues 263-283 (AISYFLILYIFNAVALFIYLS). At 284 to 291 (NMFDINSL) the chain is on the extracellular side. The chain crosses the membrane as a helical span at residues 292-312 (WNNLCQIIMAAYPASHSILLI). The Cytoplasmic portion of the chain corresponds to 313–338 (QDNPGLRRAWKRLQLRLHLYPKEWTL).

Belongs to the G-protein coupled receptor T2R family. In terms of tissue distribution, expressed in subsets of taste receptor cells of the tongue and exclusively in gustducin-positive cells.

The protein resides in the membrane. In terms of biological role, receptor that may play a role in the perception of bitterness and is gustducin-linked. May play a role in sensing the chemical composition of the gastrointestinal content. The activity of this receptor may stimulate alpha gustducin, mediate PLC-beta-2 activation and lead to the gating of TRPM5. The polypeptide is Taste receptor type 2 member 39 (TAS2R39) (Homo sapiens (Human)).